The chain runs to 876 residues: Leucine--tRNA ligase (876 aa).

The 'HIGH' region signature appears at 42–52 (PYPSGKLHMGH). A 'KMSKS' region motif is present at residues 634-638 (KMSKS). Lys637 is an ATP binding site.

Belongs to the class-I aminoacyl-tRNA synthetase family.

It localises to the cytoplasm. It carries out the reaction tRNA(Leu) + L-leucine + ATP = L-leucyl-tRNA(Leu) + AMP + diphosphate. This chain is Leucine--tRNA ligase, found in Neisseria gonorrhoeae (strain ATCC 700825 / FA 1090).